A 401-amino-acid polypeptide reads, in one-letter code: ATP phosphoribosyltransferase regulatory subunit (401 aa).

This sequence belongs to the class-II aminoacyl-tRNA synthetase family. HisZ subfamily. In terms of assembly, heteromultimer composed of HisG and HisZ subunits.

It localises to the cytoplasm. The protein operates within amino-acid biosynthesis; L-histidine biosynthesis; L-histidine from 5-phospho-alpha-D-ribose 1-diphosphate: step 1/9. Functionally, required for the first step of histidine biosynthesis. May allow the feedback regulation of ATP phosphoribosyltransferase activity by histidine. This chain is ATP phosphoribosyltransferase regulatory subunit, found in Desulforamulus reducens (strain ATCC BAA-1160 / DSM 100696 / MI-1) (Desulfotomaculum reducens).